A 278-amino-acid chain; its full sequence is Endoplasmic reticulum junction formation protein lunapark (278 aa).

Residues 1–45 (MFSALGKWVRGSRNDKDFVTKYTADLSQITSQIHQLDVALKKSQS) lie on the Cytoplasmic side of the membrane. Residues 46–66 (ILSQWQSNLTFYGIALTVLAL) form a helical membrane-spanning segment. Residues 67–77 (SYTYWEYHGYR) lie on the Lumenal side of the membrane. Residues 78–98 (PYLVVTALLCIGSLILFKWAL) form a helical membrane-spanning segment. At 99-278 (TKLYAFYNNN…PSQSEKEKTK (180 aa)) the chain is on the cytoplasmic side. Positions 107–183 (NNRLRKLAKL…ELEKFKKESH (77 aa)) form a coiled coil. Residues 223–247 (CPQCHWKSNCYRLASKPIIFICPHC) form a C4-type; plays a role in ER morphology zinc finger. The interval 258-278 (EDAIEAKQPAQPSQSEKEKTK) is disordered.

This sequence belongs to the lunapark family. Interacts with RTN1; this interaction is negatively regulated by SEY1. Interacts with SEY1 and YOP1.

It localises to the endoplasmic reticulum membrane. Plays a role in tubular endoplasmic reticulum network formation and maintenance. Works in conjunction with the ER shaping proteins (reticulons RTN1 and RTN2, YOP1), and in antagonism to SEY1 to maintain the network in a dynamic equilibrium. May counterbalance SEY1-directed polygon formation by promoting polygon loss through ring closure. The chain is Endoplasmic reticulum junction formation protein lunapark (LNP1) from Saccharomyces cerevisiae (strain ATCC 204508 / S288c) (Baker's yeast).